The primary structure comprises 1325 residues: uncharacterized protein (1325 aa).

The N-terminal stretch at 1–18 is a signal peptide; sequence MNRIYRVIWNCTLQVFQA. Residue Cys-19 is the site of N-palmitoyl cysteine attachment. A lipid anchor (S-diacylglycerol cysteine) is attached at Cys-19.

To E.coli YfaL.

Its subcellular location is the cell membrane. This is an uncharacterized protein from Escherichia coli (strain K12).